The primary structure comprises 121 residues: UPF0738 protein RBAM_011600 (121 aa).

Belongs to the UPF0738 family.

The chain is UPF0738 protein RBAM_011600 from Bacillus velezensis (strain DSM 23117 / BGSC 10A6 / LMG 26770 / FZB42) (Bacillus amyloliquefaciens subsp. plantarum).